A 252-amino-acid chain; its full sequence is tRNA (guanine-N(7)-)-methyltransferase (252 aa).

S-adenosyl-L-methionine-binding residues include E51, D76, N103, and D125. The active site involves D125. Substrate contacts are provided by residues K129, D159, and 199–202; that span reads TYYE.

It belongs to the class I-like SAM-binding methyltransferase superfamily. TrmB family.

The catalysed reaction is guanosine(46) in tRNA + S-adenosyl-L-methionine = N(7)-methylguanosine(46) in tRNA + S-adenosyl-L-homocysteine. It participates in tRNA modification; N(7)-methylguanine-tRNA biosynthesis. In terms of biological role, catalyzes the formation of N(7)-methylguanine at position 46 (m7G46) in tRNA. The chain is tRNA (guanine-N(7)-)-methyltransferase from Bacteroides thetaiotaomicron (strain ATCC 29148 / DSM 2079 / JCM 5827 / CCUG 10774 / NCTC 10582 / VPI-5482 / E50).